The sequence spans 280 residues: Ribosomal RNA small subunit methyltransferase A (280 aa).

S-adenosyl-L-methionine contacts are provided by Asn-28, Leu-30, Gly-55, Glu-77, Asp-103, and Asn-122.

Belongs to the class I-like SAM-binding methyltransferase superfamily. rRNA adenine N(6)-methyltransferase family. RsmA subfamily.

The protein localises to the cytoplasm. It carries out the reaction adenosine(1518)/adenosine(1519) in 16S rRNA + 4 S-adenosyl-L-methionine = N(6)-dimethyladenosine(1518)/N(6)-dimethyladenosine(1519) in 16S rRNA + 4 S-adenosyl-L-homocysteine + 4 H(+). In terms of biological role, specifically dimethylates two adjacent adenosines (A1518 and A1519) in the loop of a conserved hairpin near the 3'-end of 16S rRNA in the 30S particle. May play a critical role in biogenesis of 30S subunits. The polypeptide is Ribosomal RNA small subunit methyltransferase A (Dinoroseobacter shibae (strain DSM 16493 / NCIMB 14021 / DFL 12)).